We begin with the raw amino-acid sequence, 618 residues long: Glutamine--fructose-6-phosphate aminotransferase [isomerizing] (618 aa).

The active-site Nucleophile; for GATase activity is the cysteine 2. Positions 2–226 constitute a Glutamine amidotransferase type-2 domain; it reads CGIVGYAGRN…DFETAVLSPT (225 aa). Positions 69 to 94 are disordered; that stretch reads HTRWATHGRPSTKNAHPHNSGGNPGK. 2 SIS domains span residues 295–434 and 467–608; these read SEDE…VRDR and CAEG…IDKP. The For Fru-6P isomerization activity role is filled by lysine 613.

Homodimer.

It is found in the cytoplasm. The enzyme catalyses D-fructose 6-phosphate + L-glutamine = D-glucosamine 6-phosphate + L-glutamate. Catalyzes the first step in hexosamine metabolism, converting fructose-6P into glucosamine-6P using glutamine as a nitrogen source. This is Glutamine--fructose-6-phosphate aminotransferase [isomerizing] from Methanosarcina acetivorans (strain ATCC 35395 / DSM 2834 / JCM 12185 / C2A).